The sequence spans 334 residues: Lipoyl synthase (334 aa).

Positions 8–33 (LNNDTRPKVEAPARPRHPEKAHRPDT) are disordered. Residues 12 to 33 (TRPKVEAPARPRHPEKAHRPDT) are compositionally biased toward basic and acidic residues. Residues cysteine 68, cysteine 73, cysteine 79, cysteine 94, cysteine 98, cysteine 101, and serine 307 each coordinate [4Fe-4S] cluster. The 217-residue stretch at 80-296 (WEKRHATFMI…ETTAYAKGFL (217 aa)) folds into the Radical SAM core domain.

Belongs to the radical SAM superfamily. Lipoyl synthase family. [4Fe-4S] cluster serves as cofactor.

It localises to the cytoplasm. It catalyses the reaction [[Fe-S] cluster scaffold protein carrying a second [4Fe-4S](2+) cluster] + N(6)-octanoyl-L-lysyl-[protein] + 2 oxidized [2Fe-2S]-[ferredoxin] + 2 S-adenosyl-L-methionine + 4 H(+) = [[Fe-S] cluster scaffold protein] + N(6)-[(R)-dihydrolipoyl]-L-lysyl-[protein] + 4 Fe(3+) + 2 hydrogen sulfide + 2 5'-deoxyadenosine + 2 L-methionine + 2 reduced [2Fe-2S]-[ferredoxin]. Its pathway is protein modification; protein lipoylation via endogenous pathway; protein N(6)-(lipoyl)lysine from octanoyl-[acyl-carrier-protein]: step 2/2. Its function is as follows. Catalyzes the radical-mediated insertion of two sulfur atoms into the C-6 and C-8 positions of the octanoyl moiety bound to the lipoyl domains of lipoate-dependent enzymes, thereby converting the octanoylated domains into lipoylated derivatives. This chain is Lipoyl synthase, found in Methylorubrum populi (strain ATCC BAA-705 / NCIMB 13946 / BJ001) (Methylobacterium populi).